Here is a 120-residue protein sequence, read N- to C-terminus: Large ribosomal subunit protein uL18 (120 aa).

The interval 1-26 is disordered; that stretch reads MSKAKVTNARRKRSVRLKLRRSGGGR. Positions 8-23 are enriched in basic residues; that stretch reads NARRKRSVRLKLRRSG.

This sequence belongs to the universal ribosomal protein uL18 family. As to quaternary structure, part of the 50S ribosomal subunit; part of the 5S rRNA/L5/L18/L25 subcomplex. Contacts the 5S and 23S rRNAs.

This is one of the proteins that bind and probably mediate the attachment of the 5S RNA into the large ribosomal subunit, where it forms part of the central protuberance. The polypeptide is Large ribosomal subunit protein uL18 (Bradyrhizobium diazoefficiens (strain JCM 10833 / BCRC 13528 / IAM 13628 / NBRC 14792 / USDA 110)).